The chain runs to 200 residues: NADH-quinone oxidoreductase subunit B (200 aa).

Residues cysteine 79, cysteine 80, cysteine 144, and cysteine 174 each coordinate [4Fe-4S] cluster.

Belongs to the complex I 20 kDa subunit family. In terms of assembly, NDH-1 is composed of 14 different subunits. Subunits NuoB, C, D, E, F, and G constitute the peripheral sector of the complex. [4Fe-4S] cluster is required as a cofactor.

It is found in the cell inner membrane. It carries out the reaction a quinone + NADH + 5 H(+)(in) = a quinol + NAD(+) + 4 H(+)(out). In terms of biological role, NDH-1 shuttles electrons from NADH, via FMN and iron-sulfur (Fe-S) centers, to quinones in the respiratory chain. The immediate electron acceptor for the enzyme in this species is believed to be ubiquinone. Couples the redox reaction to proton translocation (for every two electrons transferred, four hydrogen ions are translocated across the cytoplasmic membrane), and thus conserves the redox energy in a proton gradient. The protein is NADH-quinone oxidoreductase subunit B of Caulobacter vibrioides (strain NA1000 / CB15N) (Caulobacter crescentus).